The primary structure comprises 221 residues: Imidazoleglycerol-phosphate dehydratase (221 aa).

The protein belongs to the imidazoleglycerol-phosphate dehydratase family.

It catalyses the reaction D-erythro-1-(imidazol-4-yl)glycerol 3-phosphate = 3-(imidazol-4-yl)-2-oxopropyl phosphate + H2O. It functions in the pathway amino-acid biosynthesis; L-histidine biosynthesis; L-histidine from 5-phospho-alpha-D-ribose 1-diphosphate: step 6/9. This Kluyveromyces lactis (strain ATCC 8585 / CBS 2359 / DSM 70799 / NBRC 1267 / NRRL Y-1140 / WM37) (Yeast) protein is Imidazoleglycerol-phosphate dehydratase (HIS3).